The following is a 357-amino-acid chain: UPF0283 membrane protein BAbS19_I09770 (357 aa).

The interval 1-36 (MSDKTPRKPTAFRLEQPARVSAASEQEEPRRPRAVK) is disordered. A compositionally biased stretch (basic and acidic residues) spans 27–36 (EEPRRPRAVK). The next 2 membrane-spanning stretches (helical) occupy residues 78-98 (ILFG…TEDL) and 109-129 (LGWT…AIIL).

This sequence belongs to the UPF0283 family.

It localises to the cell inner membrane. This chain is UPF0283 membrane protein BAbS19_I09770, found in Brucella abortus (strain S19).